The following is a 164-amino-acid chain: 2-keto-3-deoxy-D-glycero-D-galacto-9-phosphonononic acid phosphatase (164 aa).

Mg(2+) contacts are provided by Asp10 and Asp12. Substrate is bound by residues Thr34, 54 to 56, 64 to 67, and Lys80; these read TGE and RAEK. Asp103 provides a ligand contact to Mg(2+). Asn106 provides a ligand contact to substrate.

The protein belongs to the KdsC family. Homotetramer. Mg(2+) is required as a cofactor.

It carries out the reaction 3-deoxy-D-glycero-beta-D-galacto-non-2-ulopyranosonate 9-phosphate + H2O = 3-deoxy-D-glycero-beta-D-galacto-non-2-ulopyranosonate + phosphate. In terms of biological role, involved in the biosynthesis of 2-keto-3-deoxy-D-glycero-D-galacto-nononic acid used in cell-wall polysaccharides. Catalyzes the hydrolysis of 2-keto-3-deoxy-D-glycero-D-galacto-9-phosphonononic acid (KDN-9-P) to yield 2-keto-3-deoxy-D-glycero-D-galacto-nononic acid (KDN). Also able to hydrolyze N-acetylneuraminate-9-phosphate (Neu5NAc-9-P), 2-keto-3-deoxy-D-manno-octulosonate-8-phosphate (KDO-8-P), phosphoenolpyruvate (PEP), gluconate 6-phosphate, tyrosine phosphate ester and glucose-6-P as substrate. This is 2-keto-3-deoxy-D-glycero-D-galacto-9-phosphonononic acid phosphatase from Bacteroides thetaiotaomicron (strain ATCC 29148 / DSM 2079 / JCM 5827 / CCUG 10774 / NCTC 10582 / VPI-5482 / E50).